Here is a 119-residue protein sequence, read N- to C-terminus: Large ribosomal subunit protein uL22 (119 aa).

The protein belongs to the universal ribosomal protein uL22 family. As to quaternary structure, part of the 50S ribosomal subunit.

This protein binds specifically to 23S rRNA; its binding is stimulated by other ribosomal proteins, e.g. L4, L17, and L20. It is important during the early stages of 50S assembly. It makes multiple contacts with different domains of the 23S rRNA in the assembled 50S subunit and ribosome. Its function is as follows. The globular domain of the protein is located near the polypeptide exit tunnel on the outside of the subunit, while an extended beta-hairpin is found that lines the wall of the exit tunnel in the center of the 70S ribosome. In Bifidobacterium longum (strain DJO10A), this protein is Large ribosomal subunit protein uL22.